A 272-amino-acid polypeptide reads, in one-letter code: Putative hydro-lyase BBta_2883 (272 aa).

Belongs to the D-glutamate cyclase family.

This is Putative hydro-lyase BBta_2883 from Bradyrhizobium sp. (strain BTAi1 / ATCC BAA-1182).